The following is a 162-amino-acid chain: Large ribosomal subunit protein uL10 (162 aa).

The protein belongs to the universal ribosomal protein uL10 family. As to quaternary structure, part of the ribosomal stalk of the 50S ribosomal subunit. The N-terminus interacts with L11 and the large rRNA to form the base of the stalk. The C-terminus forms an elongated spine to which L12 dimers bind in a sequential fashion forming a multimeric L10(L12)X complex.

Its function is as follows. Forms part of the ribosomal stalk, playing a central role in the interaction of the ribosome with GTP-bound translation factors. This Vibrio parahaemolyticus serotype O3:K6 (strain RIMD 2210633) protein is Large ribosomal subunit protein uL10.